The sequence spans 341 residues: Ribosomal RNA small subunit methyltransferase C (341 aa).

Belongs to the methyltransferase superfamily. RsmC family. In terms of assembly, monomer.

It localises to the cytoplasm. It catalyses the reaction guanosine(1207) in 16S rRNA + S-adenosyl-L-methionine = N(2)-methylguanosine(1207) in 16S rRNA + S-adenosyl-L-homocysteine + H(+). In terms of biological role, specifically methylates the guanine in position 1207 of 16S rRNA in the 30S particle. In Shewanella amazonensis (strain ATCC BAA-1098 / SB2B), this protein is Ribosomal RNA small subunit methyltransferase C.